The primary structure comprises 425 residues: Protein CLP1 homolog (425 aa).

ATP contacts are provided by residues Glu18, Lys59, and 121 to 126 (DVGKST).

Belongs to the Clp1 family. Clp1 subfamily.

Its subcellular location is the nucleus. Required for endonucleolytic cleavage during polyadenylation-dependent pre-mRNA 3'-end formation. The polypeptide is Protein CLP1 homolog (cbc) (Drosophila mojavensis (Fruit fly)).